The primary structure comprises 205 residues: uncharacterized protein (205 aa).

Topologically, residues 1–63 (MQRTRELESS…QHPKVAKFLK (63 aa)) are cytoplasmic. The helical transmembrane segment at 64-84 (VQLVFDLISLFIFATHQLLLL) threads the bilayer. The Extracellular segment spans residues 85-124 (EDGNFGKHYFKRKTKRCSKFSCSRCNANAHHPKWFKFKHS). Residues 125–145 (LLCLGTFCFGVYSLVKINKFF) form a helical membrane-spanning segment. The Cytoplasmic portion of the chain corresponds to 146–205 (KTDQTVDLNRLLELFFWQLNAILNMKLFAFYGDHLESHSAPLDVYEDSFANKSSSGGDEV).

The protein localises to the membrane. This is an uncharacterized protein from Saccharomyces cerevisiae (strain ATCC 204508 / S288c) (Baker's yeast).